Reading from the N-terminus, the 387-residue chain is Formate-dependent phosphoribosylglycinamide formyltransferase (387 aa).

N(1)-(5-phospho-beta-D-ribosyl)glycinamide-binding positions include 12–13 (EL) and E72. Residues R104, K145, 150–155 (SSGKGQ), 185–188 (EEFI), and E193 each bind ATP. The ATP-grasp domain maps to 109 to 300 (DLAAKDLKLL…EFELHIRAIL (192 aa)). The Mg(2+) site is built by E258 and E270. N(1)-(5-phospho-beta-D-ribosyl)glycinamide contacts are provided by residues D277, K348, and 355–356 (RR).

The protein belongs to the PurK/PurT family. As to quaternary structure, homodimer.

It catalyses the reaction N(1)-(5-phospho-beta-D-ribosyl)glycinamide + formate + ATP = N(2)-formyl-N(1)-(5-phospho-beta-D-ribosyl)glycinamide + ADP + phosphate + H(+). It functions in the pathway purine metabolism; IMP biosynthesis via de novo pathway; N(2)-formyl-N(1)-(5-phospho-D-ribosyl)glycinamide from N(1)-(5-phospho-D-ribosyl)glycinamide (formate route): step 1/1. Its function is as follows. Involved in the de novo purine biosynthesis. Catalyzes the transfer of formate to 5-phospho-ribosyl-glycinamide (GAR), producing 5-phospho-ribosyl-N-formylglycinamide (FGAR). Formate is provided by PurU via hydrolysis of 10-formyl-tetrahydrofolate. In Leptospira borgpetersenii serovar Hardjo-bovis (strain JB197), this protein is Formate-dependent phosphoribosylglycinamide formyltransferase.